Here is a 681-residue protein sequence, read N- to C-terminus: DNA ligase (681 aa).

NAD(+) contacts are provided by residues 45–49 (DFDFD), 94–95 (SL), and Glu120. The active-site N6-AMP-lysine intermediate is the Lys122. 4 residues coordinate NAD(+): Arg143, Glu177, Lys289, and Lys313. Zn(2+) is bound by residues Cys403, Cys406, Cys421, and Cys426. Residues 593 to 681 (SDQQPFAGQS…SLKINFKNTI (89 aa)) form the BRCT domain.

The protein belongs to the NAD-dependent DNA ligase family. LigA subfamily. Mg(2+) serves as cofactor. Mn(2+) is required as a cofactor.

It carries out the reaction NAD(+) + (deoxyribonucleotide)n-3'-hydroxyl + 5'-phospho-(deoxyribonucleotide)m = (deoxyribonucleotide)n+m + AMP + beta-nicotinamide D-nucleotide.. Its function is as follows. DNA ligase that catalyzes the formation of phosphodiester linkages between 5'-phosphoryl and 3'-hydroxyl groups in double-stranded DNA using NAD as a coenzyme and as the energy source for the reaction. It is essential for DNA replication and repair of damaged DNA. In Leptospira borgpetersenii serovar Hardjo-bovis (strain L550), this protein is DNA ligase.